Here is a 486-residue protein sequence, read N- to C-terminus: N-succinylglutamate 5-semialdehyde dehydrogenase (486 aa).

Gly-220–Gly-225 serves as a coordination point for NAD(+). Residues Glu-243 and Cys-277 contribute to the active site.

The protein belongs to the aldehyde dehydrogenase family. AstD subfamily.

It catalyses the reaction N-succinyl-L-glutamate 5-semialdehyde + NAD(+) + H2O = N-succinyl-L-glutamate + NADH + 2 H(+). It functions in the pathway amino-acid degradation; L-arginine degradation via AST pathway; L-glutamate and succinate from L-arginine: step 4/5. Its function is as follows. Catalyzes the NAD-dependent reduction of succinylglutamate semialdehyde into succinylglutamate. In Shewanella baltica (strain OS223), this protein is N-succinylglutamate 5-semialdehyde dehydrogenase.